The primary structure comprises 603 residues: Elongation factor 4 (603 aa).

Residues 7–191 (DNIRNFSIVA…AIVTRLPPPQ (185 aa)) form the tr-type G domain. Residues 19-24 (DHGKST) and 138-141 (NKVD) contribute to the GTP site.

It belongs to the TRAFAC class translation factor GTPase superfamily. Classic translation factor GTPase family. LepA subfamily.

The protein resides in the cell inner membrane. It carries out the reaction GTP + H2O = GDP + phosphate + H(+). Required for accurate and efficient protein synthesis under certain stress conditions. May act as a fidelity factor of the translation reaction, by catalyzing a one-codon backward translocation of tRNAs on improperly translocated ribosomes. Back-translocation proceeds from a post-translocation (POST) complex to a pre-translocation (PRE) complex, thus giving elongation factor G a second chance to translocate the tRNAs correctly. Binds to ribosomes in a GTP-dependent manner. This Rhodopseudomonas palustris (strain HaA2) protein is Elongation factor 4.